We begin with the raw amino-acid sequence, 149 residues long: Decarboxylase AgnL1 (149 aa).

In terms of domain architecture, EthD spans proline 30–threonine 125.

This sequence belongs to the tpcK family.

The catalysed reaction is atrochrysone carboxylate + H(+) = atrochrysone + CO2. It functions in the pathway secondary metabolite biosynthesis. Decarboxylase; part of the gene cluster that mediates the biosynthesis of agnestins, dihydroxy-xanthone metabolites. The pathway begins with the assembly and cyclization of atrochrysone thioester by the non-reducing polyketide synthase Agnpks1. The atrochrysone carboxyl ACP thioesterase AgnL7 then breaks the thioester bond and releases the atrochrysone carboxylic acid as the first enzyme-free intermediate. The decarboxylase AgnL1 then catalyzes the concerted decarboxylation-elimination required to convert atochrysone carboxylic acid into emodin anthrone, which is further oxidized to emodin by the anthrone oxygenase AgnL2. Emodin then undergoes reduction catalyzed by the oxidoreductase AgnL4 to yield the dihydroquinone tautomer which is the substrate for reduction by the short chain dehydrogenase AgnL6 reduction to produce hydroxyketone, followed by AgnL8 dehydration and likely spontaneous autoxidation to chrysophanol. Baeyer-Villiger oxidation by the oxidase AgnL3 leads to monodictyphenone via cleavage of the C-10/C-10a bond of chrysophanol. Alternative cleavage at the C-4a/C-10 bond of chrysophanol also leads to the formation some cephalone F. Further conversion to agnestins A and B, requires reduction to dihydro-monodictyphenone, oxidation to agnestin C probably via an epoxide, and rearrangement to either agnestin A or agnestin B directly, although agnestin A or agnestin B can also interconvert. Within the cluster, AgnR1 is the only unassigned oxidoreductase present which could be involved in this conversion. However, AgnR1 seems not to be involved in this step, and thus genes involved in the proposed oxidation/reduction may be located elsewhere on the genome. Further agnestin A derivatives are probably formed by spontaneous decarboxylations, dehydrations and methanolysis reactions. This is Decarboxylase AgnL1 from Paecilomyces divaricatus (Penicillium divaricatum).